The following is a 334-amino-acid chain: Phosphate acyltransferase (334 aa).

The protein belongs to the PlsX family. In terms of assembly, homodimer. Probably interacts with PlsY.

Its subcellular location is the cytoplasm. It carries out the reaction a fatty acyl-[ACP] + phosphate = an acyl phosphate + holo-[ACP]. It functions in the pathway lipid metabolism; phospholipid metabolism. Catalyzes the reversible formation of acyl-phosphate (acyl-PO(4)) from acyl-[acyl-carrier-protein] (acyl-ACP). This enzyme utilizes acyl-ACP as fatty acyl donor, but not acyl-CoA. The protein is Phosphate acyltransferase of Halothermothrix orenii (strain H 168 / OCM 544 / DSM 9562).